The sequence spans 559 residues: Poly(3-hydroxyalkanoate) polymerase 1 (559 aa).

The active site involves C296.

It belongs to the PHA/PHB synthase family. Type II PhaC subfamily.

It participates in biopolymer metabolism; poly-(R)-3-hydroxybutanoate biosynthesis. In terms of biological role, synthesizes poly(3-hydroxyalkanoates) (PHA), complements a mutant of P.putida that does not make PHA. The protein is Poly(3-hydroxyalkanoate) polymerase 1 of Ectopseudomonas oleovorans (Pseudomonas oleovorans).